Consider the following 158-residue polypeptide: 2-C-methyl-D-erythritol 2,4-cyclodiphosphate synthase (158 aa).

Asp9 and His11 together coordinate a divalent metal cation. Residues 9 to 11 (DVH) and 35 to 36 (HS) contribute to the 4-CDP-2-C-methyl-D-erythritol 2-phosphate site. His43 contributes to the a divalent metal cation binding site. Residues 57–59 (DIG), 62–66 (FPDTD), 101–107 (AQAPKMA), 133–136 (TTTE), Phe140, and Arg143 contribute to the 4-CDP-2-C-methyl-D-erythritol 2-phosphate site.

This sequence belongs to the IspF family. Homotrimer. The cofactor is a divalent metal cation.

It carries out the reaction 4-CDP-2-C-methyl-D-erythritol 2-phosphate = 2-C-methyl-D-erythritol 2,4-cyclic diphosphate + CMP. It functions in the pathway isoprenoid biosynthesis; isopentenyl diphosphate biosynthesis via DXP pathway; isopentenyl diphosphate from 1-deoxy-D-xylulose 5-phosphate: step 4/6. Functionally, involved in the biosynthesis of isopentenyl diphosphate (IPP) and dimethylallyl diphosphate (DMAPP), two major building blocks of isoprenoid compounds. Catalyzes the conversion of 4-diphosphocytidyl-2-C-methyl-D-erythritol 2-phosphate (CDP-ME2P) to 2-C-methyl-D-erythritol 2,4-cyclodiphosphate (ME-CPP) with a corresponding release of cytidine 5-monophosphate (CMP). The sequence is that of 2-C-methyl-D-erythritol 2,4-cyclodiphosphate synthase from Vibrio cholerae serotype O1 (strain ATCC 39541 / Classical Ogawa 395 / O395).